The following is a 295-amino-acid chain: MTIKTPTVKVPGLGTDPLEQRIKEKEKKWKYKIAVLSGKGGVGKSTVAVNLTAALAKMGYFVGILDADIHGPNVAKMLGVDKEEVYAEKFDDGHFEMIPPTTDFMGQVTPIKVMSMGMMVPEDQPVIWRGPLVTKAIKQLLGDVKWGSLDFMIIDFPPGTGDEILTVVQSIKLDAAIIVTTPQEVALLDTGKAVNMMKKMEVPYVAVVENMSYLICPHCGNKIDIFGEGGGEKLAQKEGVDFLGKIPIDLKAREASDLGIPIVLYEDTPAAKAFMELAEKLVNKLKEIKGDGGKE.

38 to 45 provides a ligand contact to ATP; that stretch reads GKGGVGKS.

This sequence belongs to the Mrp/NBP35 ATP-binding proteins family. Homodimer.

Binds and transfers iron-sulfur (Fe-S) clusters to target apoproteins. Can hydrolyze ATP. The sequence is that of Iron-sulfur cluster carrier protein from Pyrococcus horikoshii (strain ATCC 700860 / DSM 12428 / JCM 9974 / NBRC 100139 / OT-3).